The following is a 146-amino-acid chain: Aspartate carbamoyltransferase regulatory chain (146 aa).

Zn(2+) contacts are provided by cysteine 102, cysteine 107, cysteine 131, and cysteine 134.

The protein belongs to the PyrI family. As to quaternary structure, contains catalytic and regulatory chains. Zn(2+) serves as cofactor.

In terms of biological role, involved in allosteric regulation of aspartate carbamoyltransferase. This is Aspartate carbamoyltransferase regulatory chain from Clostridium botulinum (strain Okra / Type B1).